The primary structure comprises 104 residues: Large ribosomal subunit protein uL24 (104 aa).

This sequence belongs to the universal ribosomal protein uL24 family. As to quaternary structure, part of the 50S ribosomal subunit.

Functionally, one of two assembly initiator proteins, it binds directly to the 5'-end of the 23S rRNA, where it nucleates assembly of the 50S subunit. Its function is as follows. One of the proteins that surrounds the polypeptide exit tunnel on the outside of the subunit. The chain is Large ribosomal subunit protein uL24 from Enterobacter sp. (strain 638).